Consider the following 115-residue polypeptide: Ribosomal protein uS4-like (115 aa).

The protein belongs to the universal ribosomal protein uS4 family.

This chain is Ribosomal protein uS4-like, found in Azoarcus sp. (strain BH72).